Here is a 134-residue protein sequence, read N- to C-terminus: Cytochrome b5 (134 aa).

Position 2 is an N-acetylalanine (Ala-2). 3 positions are modified to N6-acetyllysine: Lys-7, Lys-10, and Lys-19. The Cytochrome b5 heme-binding domain occupies 9-85 (VKYYTLEEIQ…SKTYIIGELH (77 aa)). Residues His-44 and His-68 each contribute to the heme site. Residues 109-131 (WWTNWVIPAISALAVALMYRLYM) traverse the membrane as a helical segment.

It belongs to the cytochrome b5 family.

Its subcellular location is the endoplasmic reticulum membrane. The protein localises to the microsome membrane. Cytochrome b5 is a membrane-bound hemoprotein functioning as an electron carrier for several membrane-bound oxygenases. It is also involved in several steps of the sterol biosynthesis pathway, particularly in the C-5 double bond introduction during the C-5 desaturation. This Mus musculus (Mouse) protein is Cytochrome b5 (Cyb5a).